The sequence spans 382 residues: Flap endonuclease 1-A (382 aa).

The N-domain stretch occupies residues methionine 1–arginine 104. Aspartate 34 is a binding site for Mg(2+). The DNA site is built by arginine 47 and arginine 70. The Mg(2+) site is built by aspartate 86, glutamate 158, glutamate 160, aspartate 179, and aspartate 181. Residues asparagine 122–histidine 253 form an I-domain region. Position 158 (glutamate 158) interacts with DNA. Residues glycine 231 and aspartate 233 each coordinate DNA. Aspartate 233 is a binding site for Mg(2+). The interval threonine 336 to phenylalanine 344 is interaction with PCNA. Residues valine 350–lysine 382 are disordered.

It belongs to the XPG/RAD2 endonuclease family. FEN1 subfamily. Interacts with PCNA. Three molecules of fen1 bind to one PCNA trimer with each molecule binding to one PCNA monomer. PCNA stimulates the nuclease activity without altering cleavage specificity. Mg(2+) serves as cofactor. Post-translationally, phosphorylated. Phosphorylation upon DNA damage induces relocalization to the nuclear plasma.

It is found in the nucleus. The protein localises to the nucleolus. The protein resides in the nucleoplasm. Its subcellular location is the mitochondrion. Functionally, structure-specific nuclease with 5'-flap endonuclease and 5'-3' exonuclease activities involved in DNA replication and repair. During DNA replication, cleaves the 5'-overhanging flap structure that is generated by displacement synthesis when DNA polymerase encounters the 5'-end of a downstream Okazaki fragment. It enters the flap from the 5'-end and then tracks to cleave the flap base, leaving a nick for ligation. Also involved in the long patch base excision repair (LP-BER) pathway, by cleaving within the apurinic/apyrimidinic (AP) site-terminated flap. Acts as a genome stabilization factor that prevents flaps from equilibrating into structures that lead to duplications and deletions. Also possesses 5'-3' exonuclease activity on nicked or gapped double-stranded DNA, and exhibits RNase H activity. Also involved in replication and repair of rDNA and in repairing mitochondrial DNA. This Xenopus laevis (African clawed frog) protein is Flap endonuclease 1-A (fen1-a).